A 794-amino-acid polypeptide reads, in one-letter code: Copper-exporting P-type ATPase (794 aa).

2 HMA domains span residues 4 to 69 and 71 to 137; these read TTLT…YDVA and EQVE…YDAE. Cu(+) is bound by residues Cys15, Cys18, Cys82, and Cys85. 6 consecutive transmembrane segments (helical) span residues 161–181, 186–206, 225–245, 255–275, 410–430, and 437–457; these read IISAILSLPLLLVMVVHISPI, ILVNPWVQLILSTPVQFIIGW, VLVAVGTSAAYFYSIYEMMMW, LYFETSAILITLILLGKYLEA, YFVPIVVSIAVITFIIWIIFV, and PALVSAISVLVIACPCALGLA. The active-site 4-aspartylphosphate intermediate is the Asp494. Mg(2+) is bound by residues Asp689 and Asp693. Helical transmembrane passes span 747–767 and 773–789; these read LFWAFGYNVAGIPIAACGLLA and AAMALSSVSVVMNALRL.

It belongs to the cation transport ATPase (P-type) (TC 3.A.3) family. Type IB subfamily.

The protein localises to the cell membrane. It catalyses the reaction Cu(+)(in) + ATP + H2O = Cu(+)(out) + ADP + phosphate + H(+). In terms of biological role, involved in copper export. The protein is Copper-exporting P-type ATPase (copA) of Staphylococcus epidermidis (strain ATCC 35984 / DSM 28319 / BCRC 17069 / CCUG 31568 / BM 3577 / RP62A).